The sequence spans 279 residues: MRLAVAYSTGDPAGRGAGRALARLLSAEPTSCPGAVECFKAGYLTIAGFPVEAVRLEMLDEAPDPQASAVIVLSKHRAESGRKSLTVHHPGNPTEDNSLGGRPMELAVAYPALAKALLISLAKASRETGLAESYEVTLEATHHGPTTPSKPVVFAELGSTEEDWRNPLGWETLALAVEEAIKTLPQIERECIPAAGFGGTHYVPKHTRLQLESGYCIGHTIPRYAFDRGVTAEVLKNAILKSYPGPARVALVEKKSLKSPQRRMVEEASEEAGAKVEYI.

A disordered region spans residues 81-100 (GRKSLTVHHPGNPTEDNSLG).

This sequence belongs to the DtdA deacylase family. Monomer. Zn(2+) serves as cofactor.

It carries out the reaction a D-aminoacyl-tRNA + H2O = a tRNA + a D-alpha-amino acid + H(+). The catalysed reaction is glycyl-tRNA(Ala) + H2O = tRNA(Ala) + glycine + H(+). Its function is as follows. D-aminoacyl-tRNA deacylase with broad substrate specificity. By recycling D-aminoacyl-tRNA to D-amino acids and free tRNA molecules, this enzyme counteracts the toxicity associated with the formation of D-aminoacyl-tRNA entities in vivo. This chain is D-aminoacyl-tRNA deacylase, found in Aeropyrum pernix (strain ATCC 700893 / DSM 11879 / JCM 9820 / NBRC 100138 / K1).